The sequence spans 692 residues: MNHQDFLVEIGAEELPPKALRQLAEAFAQGIRQRLEKAQLSFSELTWYAAPRRLAVHVSGLAEKQPDLEVEKRGPALQAAFDAAGAPTKACEGFARSCGTTPDKLEKLETDKGVWLVFRSKQAGAPTTGLLPAIVEESLAALPIPKRMRWGARRTEFVRPVHWIIMLFGEKVIDCEILGLKAGNTTLGHRFHHPAPIEIATPANYKDALKNTGYVMADFEERKALIRQQVEAIAKQTSGMAVIDEELLEEVASLNEWPTALMGRFEDRFLEVPAEALISTMKGNQKYFHVVDAEGRMLPYFITVANIESKDPQQVIDGNERVIRPRLSDAAFFFSTDKKRTLASRLEDLKPIVFQQQLGTVYDKAIRVGKLAAKIAAKIDSNPEWAQRAGELSKTDLATEMVMEFPELQGTMGRYYAAIDSEPEEVSMAQEEQYLPRFAGDQLPTTLTGCAVSLADKLDTIVGIFGINQPPTGAKDPFGLRRAALGVLRILVEKKLDLDLAECVQWAQELHGDLPAENLETAVVDYMLDRFRAWYEEAGVPTEVFLSVLARRPTKPVEFDQRVLAVAEFLKLDAAQALAAANKRVSNILSKEQVDISAESANPELFTEEAEKNLFRALQEKSESARPYIEQRNFTQALQQLAELKDVIDLFFDKVMVMVDDPAIRSNRMTLLASLRHVFLQVADISLLQNKA.

Belongs to the class-II aminoacyl-tRNA synthetase family. In terms of assembly, tetramer of two alpha and two beta subunits.

It is found in the cytoplasm. The catalysed reaction is tRNA(Gly) + glycine + ATP = glycyl-tRNA(Gly) + AMP + diphosphate. This is Glycine--tRNA ligase beta subunit from Hahella chejuensis (strain KCTC 2396).